The chain runs to 138 residues: Proline-rich protein 34 (138 aa).

A compositionally biased stretch (pro residues) spans 22 to 37 (SAPTSPPNPATRPAPG). Disordered regions lie at residues 22–55 (SAPT…PTRG) and 81–107 (APRL…SPAR).

This chain is Proline-rich protein 34 (PRR34), found in Homo sapiens (Human).